Consider the following 298-residue polypeptide: Probable phosphite transport system-binding protein HtxB (298 aa).

A signal peptide spans 1 to 33 (MQVFTLFSKFKKALTRAILAFIATIIVCTPAQA).

It belongs to the phosphate/phosphite/phosphonate binding protein family.

Its function is as follows. Probably forms part of a binding-protein-dependent hypophosphite transporter. This chain is Probable phosphite transport system-binding protein HtxB (htxB), found in Stutzerimonas stutzeri (Pseudomonas stutzeri).